A 983-amino-acid chain; its full sequence is Protein translocase subunit SecA (983 aa).

Residues Gln83, 101–105 (GEGKT), and Asp489 contribute to the ATP site. The tract at residues 948–983 (ISSEEENNNEKTNININEDLERTKGEAQQTAKNPNE) is disordered. Over residues 973–983 (EAQQTAKNPNE) the composition is skewed to polar residues.

Belongs to the SecA family. In terms of assembly, monomer and homodimer. Part of the essential Sec protein translocation apparatus which comprises SecA, SecYEG and auxiliary proteins SecDF. Other proteins may also be involved.

Its subcellular location is the cell membrane. The protein resides in the cytoplasm. It carries out the reaction ATP + H2O + cellular proteinSide 1 = ADP + phosphate + cellular proteinSide 2.. Its function is as follows. Part of the Sec protein translocase complex. Interacts with the SecYEG preprotein conducting channel. Has a central role in coupling the hydrolysis of ATP to the transfer of proteins into and across the cell membrane, serving as an ATP-driven molecular motor driving the stepwise translocation of polypeptide chains across the membrane. In Mesomycoplasma hyopneumoniae (strain 7448) (Mycoplasma hyopneumoniae), this protein is Protein translocase subunit SecA.